The following is a 400-amino-acid chain: Formate-dependent phosphoribosylglycinamide formyltransferase (400 aa).

Residues 22–23 and Glu82 contribute to the N(1)-(5-phospho-beta-D-ribosyl)glycinamide site; that span reads EL. Residues Arg115, Lys157, 162 to 167, 197 to 200, and Glu205 each bind ATP; these read SSGKGQ and EGFV. The region spanning 120 to 315 is the ATP-grasp domain; that stretch reads RLAAETLGLP…EFELHARAIL (196 aa). 2 residues coordinate Mg(2+): Glu274 and Glu286. Residues Asp293, Lys362, and 369 to 370 contribute to the N(1)-(5-phospho-beta-D-ribosyl)glycinamide site; that span reads RR.

The protein belongs to the PurK/PurT family. In terms of assembly, homodimer.

The catalysed reaction is N(1)-(5-phospho-beta-D-ribosyl)glycinamide + formate + ATP = N(2)-formyl-N(1)-(5-phospho-beta-D-ribosyl)glycinamide + ADP + phosphate + H(+). It participates in purine metabolism; IMP biosynthesis via de novo pathway; N(2)-formyl-N(1)-(5-phospho-D-ribosyl)glycinamide from N(1)-(5-phospho-D-ribosyl)glycinamide (formate route): step 1/1. Involved in the de novo purine biosynthesis. Catalyzes the transfer of formate to 5-phospho-ribosyl-glycinamide (GAR), producing 5-phospho-ribosyl-N-formylglycinamide (FGAR). Formate is provided by PurU via hydrolysis of 10-formyl-tetrahydrofolate. The polypeptide is Formate-dependent phosphoribosylglycinamide formyltransferase (Mycolicibacterium vanbaalenii (strain DSM 7251 / JCM 13017 / BCRC 16820 / KCTC 9966 / NRRL B-24157 / PYR-1) (Mycobacterium vanbaalenii)).